Here is a 220-residue protein sequence, read N- to C-terminus: ATP-dependent Clp protease proteolytic subunit (220 aa).

Residue serine 122 is the Nucleophile of the active site. Residue histidine 147 is part of the active site.

The protein belongs to the peptidase S14 family. As to quaternary structure, fourteen ClpP subunits assemble into 2 heptameric rings which stack back to back to give a disk-like structure with a central cavity, resembling the structure of eukaryotic proteasomes.

Its subcellular location is the cytoplasm. It carries out the reaction Hydrolysis of proteins to small peptides in the presence of ATP and magnesium. alpha-casein is the usual test substrate. In the absence of ATP, only oligopeptides shorter than five residues are hydrolyzed (such as succinyl-Leu-Tyr-|-NHMec, and Leu-Tyr-Leu-|-Tyr-Trp, in which cleavage of the -Tyr-|-Leu- and -Tyr-|-Trp bonds also occurs).. Functionally, cleaves peptides in various proteins in a process that requires ATP hydrolysis. Has a chymotrypsin-like activity. Plays a major role in the degradation of misfolded proteins. This chain is ATP-dependent Clp protease proteolytic subunit, found in Colwellia psychrerythraea (strain 34H / ATCC BAA-681) (Vibrio psychroerythus).